A 123-amino-acid polypeptide reads, in one-letter code: Small ribosomal subunit protein uS13 (123 aa).

A disordered region spans residues 97 to 123 (PVRGQRTRSNARTRKGPRPSRIKKKGK). Residues 101-123 (QRTRSNARTRKGPRPSRIKKKGK) show a composition bias toward basic residues.

The protein belongs to the universal ribosomal protein uS13 family. In terms of assembly, part of the 30S ribosomal subunit. Forms a loose heterodimer with protein S19. Forms two bridges to the 50S subunit in the 70S ribosome.

Its function is as follows. Located at the top of the head of the 30S subunit, it contacts several helices of the 16S rRNA. In the 70S ribosome it contacts the 23S rRNA (bridge B1a) and protein L5 of the 50S subunit (bridge B1b), connecting the 2 subunits; these bridges are implicated in subunit movement. Contacts the tRNAs in the A and P-sites. This chain is Small ribosomal subunit protein uS13, found in Fervidobacterium nodosum (strain ATCC 35602 / DSM 5306 / Rt17-B1).